The chain runs to 319 residues: Type II methyltransferase M.MpnI (319 aa).

This sequence belongs to the N(4)/N(6)-methyltransferase family.

The catalysed reaction is a 2'-deoxyadenosine in DNA + S-adenosyl-L-methionine = an N(6)-methyl-2'-deoxyadenosine in DNA + S-adenosyl-L-homocysteine + H(+). Its function is as follows. A methylase that recognizes the double-stranded sequence 5'-CTAT-3' and methylates A-3 on one strand; probably responsible for all of the methylation on this site in the genome. This Mycoplasma pneumoniae (strain ATCC 29342 / M129 / Subtype 1) (Mycoplasmoides pneumoniae) protein is Type II methyltransferase M.MpnI.